Reading from the N-terminus, the 252-residue chain is 3-deoxy-manno-octulosonate cytidylyltransferase (252 aa).

It belongs to the KdsB family.

The protein localises to the cytoplasm. The catalysed reaction is 3-deoxy-alpha-D-manno-oct-2-ulosonate + CTP = CMP-3-deoxy-beta-D-manno-octulosonate + diphosphate. It participates in nucleotide-sugar biosynthesis; CMP-3-deoxy-D-manno-octulosonate biosynthesis; CMP-3-deoxy-D-manno-octulosonate from 3-deoxy-D-manno-octulosonate and CTP: step 1/1. It functions in the pathway bacterial outer membrane biogenesis; lipopolysaccharide biosynthesis. Functionally, activates KDO (a required 8-carbon sugar) for incorporation into bacterial lipopolysaccharide in Gram-negative bacteria. The sequence is that of 3-deoxy-manno-octulosonate cytidylyltransferase from Nitratidesulfovibrio vulgaris (strain DP4) (Desulfovibrio vulgaris).